The chain runs to 453 residues: Fibrinogen gamma chain (453 aa).

An N-terminal signal peptide occupies residues 1–26 (MSWSLHPRNLILYFYALLFLSSTCVA). At Ser-68 the chain carries Phosphoserine; by FAM20C. Asn-78 is a glycosylation site (N-linked (GlcNAc...) (complex) asparagine). Residues 170 to 416 (QIHDITGKDC…KTTMKIIPFN (247 aa)) enclose the Fibrinogen C-terminal domain. Residues Cys-179 and Cys-208 are joined by a disulfide bond. N-linked (GlcNAc...) asparagine; in variant Asahi glycosylation occurs at Asn-334. Asp-344, Asp-346, Phe-348, and Gly-350 together coordinate Ca(2+). Cysteines 352 and 365 form a disulfide. Residues 400 to 422 (TRWYSMKKTTMKIIPFNRLTIGE) form a gamma-chain polymerization, binding amino end of another fibrin alpha chain region. The interval 423–437 (GQQHHLGGAKQVRPE) is platelet aggregation and Staphylococcus clumping. Residue Gln-424 forms an Isoglutamyl lysine isopeptide (Gln-Lys) (interchain with K-432) linkage. The segment at 424 to 453 (QQHHLGGAKQVRPEHPAETEYDSLYPEDDL) is disordered. An Isoglutamyl lysine isopeptide (Lys-Gln) (interchain with Q-424) cross-link involves residue Lys-432. Residues 442 to 453 (TEYDSLYPEDDL) are compositionally biased toward acidic residues. A sulfotyrosine mark is found at Tyr-444 and Tyr-448.

As to quaternary structure, heterohexamer; disulfide linked. Contains 2 sets of 3 non-identical chains (alpha, beta and gamma). The 2 heterotrimers are in head to head conformation with the N-termini in a small central domain. Post-translationally, conversion of fibrinogen to fibrin is triggered by thrombin, which cleaves fibrinopeptides A and B from alpha and beta chains, and thus exposes the N-terminal polymerization sites responsible for the formation of the soft clot. The soft clot is converted into the hard clot by factor XIIIA which catalyzes the epsilon-(gamma-glutamyl)lysine cross-linking between gamma chains (stronger) and between alpha chains (weaker) of different monomers. Sulfation of C-terminal tyrosines increases affinity for thrombin. In terms of tissue distribution, detected in blood plasma (at protein level).

Its subcellular location is the secreted. Together with fibrinogen alpha (FGA) and fibrinogen beta (FGB), polymerizes to form an insoluble fibrin matrix. Has a major function in hemostasis as one of the primary components of blood clots. In addition, functions during the early stages of wound repair to stabilize the lesion and guide cell migration during re-epithelialization. Was originally thought to be essential for platelet aggregation, based on in vitro studies using anticoagulated blood. However, subsequent studies have shown that it is not absolutely required for thrombus formation in vivo. Enhances expression of SELP in activated platelets via an ITGB3-dependent pathway. Maternal fibrinogen is essential for successful pregnancy. Fibrin deposition is also associated with infection, where it protects against IFNG-mediated hemorrhage. May also facilitate the antibacterial immune response via both innate and T-cell mediated pathways. In Homo sapiens (Human), this protein is Fibrinogen gamma chain (FGG).